The primary structure comprises 351 residues: Phosphate acyltransferase (351 aa).

It belongs to the PlsX family. Homodimer. Probably interacts with PlsY.

The protein localises to the cytoplasm. The catalysed reaction is a fatty acyl-[ACP] + phosphate = an acyl phosphate + holo-[ACP]. The protein operates within lipid metabolism; phospholipid metabolism. Functionally, catalyzes the reversible formation of acyl-phosphate (acyl-PO(4)) from acyl-[acyl-carrier-protein] (acyl-ACP). This enzyme utilizes acyl-ACP as fatty acyl donor, but not acyl-CoA. This Neisseria meningitidis serogroup B (strain ATCC BAA-335 / MC58) protein is Phosphate acyltransferase.